The primary structure comprises 177 residues: 18.9 kDa heat shock protein (177 aa).

The interval 1-35 (MSMITSMLGRKQNAQQKGGGGGGRTGGGGGGEIEP) is disordered. The span at 17 to 32 (KGGGGGGRTGGGGGGE) shows a compositional bias: gly residues. The sHSP domain maps to 63-177 (AAGVPSTASM…PHARIIPITN (115 aa)).

This sequence belongs to the small heat shock protein (HSP20) family. As to quaternary structure, may form oligomeric structures.

It localises to the cytoplasm. The chain is 18.9 kDa heat shock protein (HSP18.9) from Oryza sativa subsp. japonica (Rice).